Reading from the N-terminus, the 149-residue chain is Low molecular weight protein-tyrosine-phosphatase Wzb (149 aa).

The active-site Nucleophile is the Cys-9. Residue Arg-15 is part of the active site. Residue Asp-115 is the Proton donor of the active site.

This sequence belongs to the low molecular weight phosphotyrosine protein phosphatase family.

It catalyses the reaction O-phospho-L-tyrosyl-[protein] + H2O = L-tyrosyl-[protein] + phosphate. It functions in the pathway glycan metabolism; exopolysaccharide biosynthesis. Its function is as follows. Dephosphorylates Wzc. Required for the extracellular polysaccharide colanic acid synthesis. Probably involved in the export of colanic acid from the cell to medium. Involved in protection of cells against contact-dependent growth inhibition (CDI). The chain is Low molecular weight protein-tyrosine-phosphatase Wzb (wzb) from Salmonella typhimurium (strain LT2 / SGSC1412 / ATCC 700720).